The chain runs to 92 residues: MRKLRNKDILKVLREIAEYGIPEEILTDHGTQFVAAKSREKVKHILARVRLRESEKFGSVEAVVGWHNEIKPHRSLEWDELCNAFWCKLPPD.

This is an uncharacterized protein from Archaeoglobus fulgidus (strain ATCC 49558 / DSM 4304 / JCM 9628 / NBRC 100126 / VC-16).